A 254-amino-acid chain; its full sequence is 14-3-3 protein 2 (254 aa).

The protein belongs to the 14-3-3 family. Homodimer.

In Solanum lycopersicum (Tomato), this protein is 14-3-3 protein 2 (TFT2).